A 256-amino-acid chain; its full sequence is Small ribosomal subunit protein eS1 (256 aa).

A compositionally biased stretch (basic residues) spans 1–18; it reads MAVGKNKRLSKGKKGVKK. The tract at residues 1–20 is disordered; sequence MAVGKNKRLSKGKKGVKKRT. Alanine 2 is subject to N-acetylalanine; partial.

It belongs to the eukaryotic ribosomal protein eS1 family. As to quaternary structure, component of the small ribosomal subunit. Mature ribosomes consist of a small (40S) and a large (60S) subunit. The 40S subunit contains about 33 different proteins and 1 molecule of RNA (18S). The 60S subunit contains about 49 different proteins and 3 molecules of RNA (25S, 5.8S and 5S).

The protein resides in the cytoplasm. The protein is Small ribosomal subunit protein eS1 (rps1) of Aspergillus clavatus (strain ATCC 1007 / CBS 513.65 / DSM 816 / NCTC 3887 / NRRL 1 / QM 1276 / 107).